Consider the following 160-residue polypeptide: Major strawberry allergen Fra a 1.07 (160 aa).

This sequence belongs to the BetVI family. Post-translationally, phosphorylated in vivo. Phosphorylation prevents its activity as ribonuclease. Highly expressed in roots. Expressed a low levels in ripe red fruits.

In terms of biological role, possesses ribonuclease activity in vitro. In Fragaria ananassa (Strawberry), this protein is Major strawberry allergen Fra a 1.07.